Reading from the N-terminus, the 1450-residue chain is Arf-GAP with Rho-GAP domain, ANK repeat and PH domain-containing protein 1 (1450 aa).

The SAM domain maps to 6–70 (DAALSVAEWL…LAGLLRAHTS (65 aa)). A required for interaction with SH3KBP1 region spans residues 81–90 (PVPMKRHIFR). 2 disordered regions span residues 89–144 (FRSP…LPPL) and 173–302 (TKEE…SSLS). Residues 92–102 (PPVPATPPEPL) are compositionally biased toward pro residues. Over residues 190–199 (QSEEPLSTLP) the composition is skewed to low complexity. Residues 200–219 (QGPPQPPSPPPCPPEIPPKP) are compositionally biased toward pro residues. Acidic residues-rich tracts occupy residues 225 to 236 (EFDDSDYDEVPE) and 269 to 286 (EGEE…EDDH). Ser229 carries the phosphoserine modification. Tyr231 is subject to Phosphotyrosine; by PTK6. Residues 327–419 (PVIKAGWLDK…WMQALQQAMA (93 aa)) form the PH 1 domain. At Thr354 the chain carries Phosphothreonine. At Ser428 the chain carries Phosphoserine. Phosphotyrosine is present on residues Tyr431 and Tyr504. The PH 2 domain maps to 440 to 529 (QPDRAGSLEL…WLEAMQGAIA (90 aa)). In terms of domain architecture, Arf-GAP spans 535-660 (SEVAERIWAA…RYHPLFGNQE (126 aa)). Residues 550-576 (CADCGAPQPDWASINLCVVICKRCAGE) form a C4-type zinc finger. Ser738 carries the post-translational modification Phosphoserine. One can recognise a PH 3 domain in the interval 743–850 (TVSHSGFLYK…WVKCIAKAFV (108 aa)). A Rho-GAP domain is found at 954-1139 (ASMGDTLSEQ…DLINHYVVVF (186 aa)). The Ras-associating domain maps to 1172–1261 (GDFICTVYLE…SHLVVKKHQA (90 aa)). A PH 4 domain is found at 1274–1396 (GDTKHGMMKF…WFATFLFVQH (123 aa)). Phosphoserine occurs at positions 1428 and 1435.

Interacts with SH3KBP1/CIN85 (via SH3 domains). The interaction is independent of EGF and does not affect ARAP1 GTPase-activating activity but is involved in regulating ubiquitination and endocytic trafficking of EGFR. ARAP1 competes with E3 ubiquitin-protein ligase CBL for binding to SH3KBP1, preventing interaction of CBL with SH3KBP1; this is likely to regulate SH3KBP1-mediated internalization of EGFR. Interacts with TNFRSF10A. In terms of processing, phosphorylated by PTK6 following EGF stimulation which enhances EGFR signaling by delaying EGFR down-regulation; the interaction is mediated by the SH2 domain of PTK6. Phosphorylation promotes association with the Golgi apparatus and endosomes. In terms of tissue distribution, detected in heart, skeletal muscle, spleen, kidney, liver, placenta, lung, peripheral blood leukocytes, adrenal gland, bone marrow, brain, lymph node, mammary gland, prostate, spinal cord, stomach, thyroid and trachea.

It localises to the cytoplasm. The protein localises to the golgi apparatus. It is found in the trans-Golgi network. The protein resides in the golgi stack. Its subcellular location is the cell membrane. It localises to the endosome. The protein localises to the multivesicular body. It is found in the cell projection. The protein resides in the ruffle. Its subcellular location is the podosome. It localises to the early endosome. Phosphatidylinositol 3,4,5-trisphosphate-dependent GTPase-activating protein that modulates actin cytoskeleton remodeling by regulating ARF and RHO family members. Activated by phosphatidylinositol 3,4,5-trisphosphate (PtdIns(3,4,5)P3) binding and, to a lesser extent, by phosphatidylinositol 3,4-bisphosphate (PtdIns(3,4)P2) binding. Has a preference for ARF1 and ARF5. Positively regulates the ring size of circular dorsal ruffles and promotes macropinocytosis. Acts as a bridging factor in osteoclasts to control actin and membrane dynamics. Regulates the condensing of osteoclast podosomes into sealing zones which segregate the bone-facing membrane from other membrane domains and are required for osteoclast resorption activity. Also regulates recruitment of the AP-3 complex to endosomal membranes and trafficking of lysosomal membrane proteins to the ruffled membrane border of osteoclasts to modulate bone resorption. Regulates the endocytic trafficking of EGFR. Regulates the incorporation of CD63 and CD9 into multivesicular bodies. Required in the retinal pigment epithelium (RPE) for photoreceptor survival due to its role in promoting RPE phagocytosis. This Homo sapiens (Human) protein is Arf-GAP with Rho-GAP domain, ANK repeat and PH domain-containing protein 1 (ARAP1).